The primary structure comprises 217 residues: Resolvase homolog YneB (217 aa).

The region spanning 2-147 (KALIYARVST…RGMKRAVKNG (146 aa)) is the Resolvase/invertase-type recombinase catalytic domain. Residue Ser-10 is the O-(5'-phospho-DNA)-serine intermediate of the active site.

This sequence belongs to the site-specific recombinase resolvase family.

This chain is Resolvase homolog YneB (yneB), found in Bacillus subtilis (strain 168).